The sequence spans 59 residues: Potassium channel toxin alpha-KTx 4.1 (59 aa).

Residues 1–22 (MKAFYGILIIFILISMIDLSKQ) form the signal peptide. 3 disulfides stabilise this stretch: C29–C50, C35–C55, and C39–C57. An interaction with Ca(2+)-activated K(+) channels region spans residues 48 to 55 (GKCMNGKC).

Belongs to the short scorpion toxin superfamily. Potassium channel inhibitor family. Alpha-KTx 04 subfamily. As to expression, expressed by the venom gland.

Its subcellular location is the secreted. Potently blocks Kv1.1/KCNA1 (85%), Kv1.2/KCNA2 (91%), Kv1.3/KCNA3 (89%), Kv1.6/KCNA6 (94%), and Shaker (97%). The protein is Potassium channel toxin alpha-KTx 4.1 of Tityus serrulatus (Brazilian scorpion).